We begin with the raw amino-acid sequence, 484 residues long: Glutathione reductase (484 aa).

FAD-binding residues include S32 and G33. S32 lines the glutathione pocket. R39 is a glutathione binding site. 4 residues coordinate FAD: E52, T59, C60, and K68. C60 and C65 are joined by a disulfide. Position 122 (Y122) interacts with glutathione. A138 lines the FAD pocket. 5 residues coordinate NADP(+): A204, I207, E210, R227, and R233. T242 contacts glutathione. NADP(+) is bound at residue G293. D333 serves as a coordination point for FAD. Position 339 (E339) interacts with NADP(+). T341 contacts FAD. Residue R349 coordinates glutathione. V374 is a binding site for NADP(+). K426 lines the glutathione pocket. H473 contacts FAD. The active-site Proton acceptor is the H473.

This sequence belongs to the class-I pyridine nucleotide-disulfide oxidoreductase family. As to quaternary structure, homodimer. FAD is required as a cofactor.

It localises to the cytoplasm. The protein localises to the mitochondrion. The catalysed reaction is 2 glutathione + NADP(+) = glutathione disulfide + NADPH + H(+). Its function is as follows. Catalyzes the reduction of glutathione disulfide (GSSG) to reduced glutathione (GSH). Constitutes the major mechanism to maintain a high GSH:GSSG ratio in the cytosol. The chain is Glutathione reductase (GLR1) from Kluyveromyces lactis (strain ATCC 8585 / CBS 2359 / DSM 70799 / NBRC 1267 / NRRL Y-1140 / WM37) (Yeast).